The sequence spans 336 residues: Formimidoylglutamase (336 aa).

Residues 1–10 (MNPNFTTEHT) are compositionally biased toward polar residues. Residues 1–22 (MNPNFTTEHTWQGRHDPEDGQA) are disordered. The segment covering 11 to 22 (WQGRHDPEDGQA) has biased composition (basic and acidic residues). Residues His127, Asp157, His159, Asp161, Asp254, and Asp256 each coordinate Mn(2+).

This sequence belongs to the arginase family. It depends on Mn(2+) as a cofactor.

It carries out the reaction N-formimidoyl-L-glutamate + H2O = formamide + L-glutamate. Its pathway is amino-acid degradation; L-histidine degradation into L-glutamate; L-glutamate from N-formimidoyl-L-glutamate (hydrolase route): step 1/1. In terms of biological role, catalyzes the conversion of N-formimidoyl-L-glutamate to L-glutamate and formamide. In Vibrio cholerae serotype O1 (strain ATCC 39541 / Classical Ogawa 395 / O395), this protein is Formimidoylglutamase.